The following is a 324-amino-acid chain: Heat-inducible transcription repressor HrcA (324 aa).

It belongs to the HrcA family.

Functionally, negative regulator of class I heat shock genes (grpE-dnaK-dnaJ and groELS operons). Prevents heat-shock induction of these operons. The sequence is that of Heat-inducible transcription repressor HrcA from Parasynechococcus marenigrum (strain WH8102).